Consider the following 586-residue polypeptide: FAD-linked oxidoreductase orf1 (586 aa).

Residues methionine 1–alanine 17 form the signal peptide. 12 N-linked (GlcNAc...) asparagine glycosylation sites follow: asparagine 29, asparagine 51, asparagine 79, asparagine 110, asparagine 146, asparagine 188, asparagine 314, asparagine 321, asparagine 358, asparagine 402, asparagine 434, and asparagine 461. The 180-residue stretch at threonine 124 to aspartate 303 folds into the FAD-binding PCMH-type domain.

This sequence belongs to the oxygen-dependent FAD-linked oxidoreductase family.

It carries out the reaction betaenone C = betaenone A. It functions in the pathway mycotoxin biosynthesis. Functionally, FAD-linked oxidoreductase; part of the gene cluster that mediates the biosynthesis of betaenones, phytotoxic polyketides involved in leaf spot disease in sugar beets. The first step of the pathway is the synthesis of dehydroprobetaenone I by the polyketide synthase bet1 and the enoyl reductase bet3 via condensation of one acetyl-CoA starter unit with 7 malonyl-CoA units and 5 methylations. The C-terminal reductase (R) domain of bet1 catalyzes the reductive release of the polyketide chain. Because bet1 lacks a designated enoylreductase (ER) domain, the required activity is provided the enoyl reductase bet3. The short-chain dehydrogenase/reductase bet4 then catalyzes reduction of dehydroprobetaenone I to probetaenone I. The cytochrome P450 monooxygenase bet2 catalyzes successive epoxidation, oxidation (resulting from epoxide opening) and hydroxylation to install a tertiary alcohol in the decaline ring to yield betaenone C from dehydroprobetaenone I and betaenone B from probetaenone I. The FAD-linked oxidoreductase (orf1) is probably responsible for the conversion of betaenone C to betaenone A via an intramolecular aldol reaction between C-1 and C-17 to form the bridged tricyclic system in betaenone A. This chain is FAD-linked oxidoreductase orf1, found in Neocamarosporium betae (Beet black rot fungus).